A 509-amino-acid chain; its full sequence is Histidine--tRNA ligase (509 aa).

This sequence belongs to the class-II aminoacyl-tRNA synthetase family. In terms of assembly, homodimer.

The protein localises to the cytoplasm. It carries out the reaction tRNA(His) + L-histidine + ATP = L-histidyl-tRNA(His) + AMP + diphosphate + H(+). The protein is Histidine--tRNA ligase of Rhodopseudomonas palustris (strain TIE-1).